A 64-amino-acid chain; its full sequence is MRQGCKFRGSSQKIRWSRSPPSSLLHTLRPRLLSAEITLQTNLPLQSPCCRLCFLRGTQAKTLK.

Widely expressed; not found in breast.

This is an uncharacterized protein from Homo sapiens (Human).